Here is a 121-residue protein sequence, read N- to C-terminus: Large ribosomal subunit protein uL22c (121 aa).

This sequence belongs to the universal ribosomal protein uL22 family. In terms of assembly, part of the 50S ribosomal subunit.

It localises to the plastid. The protein resides in the chloroplast. Functionally, this protein binds specifically to 23S rRNA. Its function is as follows. The globular domain of the protein is located near the polypeptide exit tunnel on the outside of the subunit, while an extended beta-hairpin is found that lines the wall of the exit tunnel in the center of the 70S ribosome. The polypeptide is Large ribosomal subunit protein uL22c (rpl22) (Guillardia theta (Cryptophyte)).